Reading from the N-terminus, the 245-residue chain is Uridylate kinase (245 aa).

20-23 (KVSG) contributes to the ATP binding site. Gly62 is a binding site for UMP. Positions 63 and 67 each coordinate ATP. UMP-binding positions include Asp81 and 142-149 (IGSPFFTT). The ATP site is built by Thr169, Gln170, Tyr175, and Asp178.

It belongs to the UMP kinase family. In terms of assembly, homohexamer.

It is found in the cytoplasm. The enzyme catalyses UMP + ATP = UDP + ADP. It participates in pyrimidine metabolism; CTP biosynthesis via de novo pathway; UDP from UMP (UMPK route): step 1/1. With respect to regulation, inhibited by UTP. In terms of biological role, catalyzes the reversible phosphorylation of UMP to UDP. This is Uridylate kinase from Anaplasma marginale (strain St. Maries).